Reading from the N-terminus, the 151-residue chain is Large ribosomal subunit protein bL9 (151 aa).

It belongs to the bacterial ribosomal protein bL9 family.

In terms of biological role, binds to the 23S rRNA. The sequence is that of Large ribosomal subunit protein bL9 from Francisella tularensis subsp. holarctica (strain LVS).